A 1055-amino-acid chain; its full sequence is MATTTLPNTKQQAAQFANSVADRAKENIDAAKEQLQKALDKLGKTGKKLTLYIPKNYKKGNGLTALIKAAQKLGIEVYHEGKDGPALTNGILNTGKKLLGLTERGLTLFAPELDKWIQGNKHLSNSVGSTGNLTKAIDKVQSVLGTLQAFLNTAFSGMDLDALIKARQNGKNVTDVQLAKASLNLINELIGTISSITNNVDTFSKQLNKLGEALGQVKHFGSFGDKLKNLPKLGNLGKGLGALSGVLSAISAALLLANKDADTATKAAAAAELTNKVLGNIGKAITQYLIAQRAAAGLSTTGPVAGLIASVVSLAISPLSFLGIAKQFDRARMLEEYSKRFKKFGYNGDSLLGQFYKNTGIADAAITTINTVLSAIAAGVGAASAGSLVGAPIGLLVSAITSLISGILDASKQAVFEHIANQLADKIKAWENKYGKNYFENGYDARHSAFLEDSLKLFNELREKYKTENILSITQQGWDQRIGELAGITRNGDRIQSGKAYVDYLKKGEELAKHSDKFTKQILDPIKGNIDLSGIKGSTTLTFLNPLLTAGKEERKTRQSGKYEFITELKVKGRTDWKVKGVPNSNGVYDFSNLIQHAVTRDNKVLEARLIANLGAKDDYVFVGSGSTIVNAGDGYDVVDYSKGRTGALTIDGRNATKAGQYKVERDLSGTQVLQETVSKQETKRGKVTDLLEYRNYKLDYYYTNKGFKAHDELNSVEEIIGSTLRDKFYGSKFNDVFHGHDGDDLIYGYDGDDRLYGDNGNDEIHGGQGNDKLYGGAGNDRLFGEYGNNYLDGGEGDDHLEGGNGSDILRGGSGNDKLFGNQGDDLLDGGEGDDQLAGGEGNDIYVYRKEYGHHTITEHSGDKDKLSLANINLKDVSFERNGNDLLLKTNNRTAVTFKGWFSKPNSSAGLDEYQRKLLEYAPEKDRARLKRQFELQRGKVDKSLNNKVEEIIGKDGERITSQDIDNLFDKSGNKKTISPQELAGLIKNKGKSSSLMSSSRSSSMLTQKSGLSNDISRIISATSGFGSSGKALSASPLQTNNNFNSYANSLATTA.

Residues 11–49 (QQAAQFANSVADRAKENIDAAKEQLQKALDKLGKTGKKL) are a coiled coil. Cholesterol recognition/amino acid consensus (CRAC) region stretches follow at residues 334-340 (LEEYSKR) and 502-506 (VDYLK). Hemolysin-type calcium-binding repeat units follow at residues 721–738 (IGST…NDVF), 739–756 (HGHD…DDRL), 757–774 (YGDN…NDKL), 775–792 (YGGA…NNYL), 793–810 (DGGE…SDIL), 811–828 (RGGS…DDLL), and 829–846 (DGGE…NDIY). The tract at residues 795-815 (GEGDDHLEGGNGSDILRGGSG) is disordered. A disordered region spans residues 990 to 1009 (KGKSSSLMSSSRSSSMLTQK). Over residues 993-1006 (SSSLMSSSRSSSML) the composition is skewed to low complexity.

It belongs to the RTX prokaryotic toxin (TC 1.C.11) family. In terms of assembly, interacts specifically with the superoxide dismutase [Cu-Zn]. This interaction may protect LtxA from reactive oxygen species and reactive nitrogen species produced by host inflammatory cells during disease. Interacts with the human leukocyte adhesion glycoprotein LFA-1 (ITGAL-ITGB2). Acylated at Lys-562 and Lys-687 by LtxC. This modification is required for full activity. Isolated methyl esters contain palmitoyl and palmitolyl fatty acyl groups with smaller quantities of myristic and stearic fatty acids.

The protein localises to the cell outer membrane. It localises to the secreted. Functionally, virulence factor that plays an important role in immune evasion. Lyses human lymphocytes and monocytes. Binds to the LFA-1 integrin on the surface of the host cell and to cholesterol-containing membranes, which probably results in large LtxA-LFA-1 clusters in lipid rafts. Also shows beta-hemolytic activity on certain types of growth media. This Aggregatibacter actinomycetemcomitans (Actinobacillus actinomycetemcomitans) protein is Leukotoxin.